A 200-amino-acid polypeptide reads, in one-letter code: LexA repressor (200 aa).

Catalysis depends on for autocatalytic cleavage activity residues serine 121 and lysine 158.

It belongs to the peptidase S24 family. In terms of assembly, homodimer.

It carries out the reaction Hydrolysis of Ala-|-Gly bond in repressor LexA.. Functionally, binds a consensus sequence 5'-TGTTC-N(4)-GAACA-3'; some genes have a tandem consensus sequence and their binding is cooperative. Binds to the promoters of a number of genes, including lexA and splB. Represses a number of genes involved in the response to DNA damage (SOS response). The protein is LexA repressor of Opitutus terrae (strain DSM 11246 / JCM 15787 / PB90-1).